Consider the following 79-residue polypeptide: MTDIKIDQTLDTLGLRCPEPVMLTRKTIRNMAEGEVLLIVADDPATTRDIPSFCEFMDHQLLNSETENTPYRYWVKKGL.

Residue C17 is the Cysteine persulfide intermediate of the active site.

The protein belongs to the sulfur carrier protein TusA family.

The protein resides in the cytoplasm. Its function is as follows. Sulfur carrier protein which probably makes part of a sulfur-relay system. The polypeptide is Sulfur carrier protein TusA (Actinobacillus pleuropneumoniae serotype 7 (strain AP76)).